Here is a 141-residue protein sequence, read N- to C-terminus: Small ribosomal subunit protein bS6 (141 aa).

The disordered stretch occupies residues 96 to 141 (VTGPSEMLKAEENRSERRERRERPEHADGAEGDDSNDSDNSDNADE). Basic and acidic residues predominate over residues 103 to 124 (LKAEENRSERRERRERPEHADG). Residues 125-141 (AEGDDSNDSDNSDNADE) show a composition bias toward acidic residues.

It belongs to the bacterial ribosomal protein bS6 family.

Its function is as follows. Binds together with bS18 to 16S ribosomal RNA. The sequence is that of Small ribosomal subunit protein bS6 from Pseudomonas entomophila (strain L48).